We begin with the raw amino-acid sequence, 431 residues long: UDP-N-acetylglucosamine 1-carboxyvinyltransferase (431 aa).

Residue 22–23 (KN) coordinates phosphoenolpyruvate. Residue arginine 102 participates in UDP-N-acetyl-alpha-D-glucosamine binding. Catalysis depends on cysteine 126, which acts as the Proton donor. Cysteine 126 carries the post-translational modification 2-(S-cysteinyl)pyruvic acid O-phosphothioketal. Residues aspartate 318 and isoleucine 340 each contribute to the UDP-N-acetyl-alpha-D-glucosamine site.

It belongs to the EPSP synthase family. MurA subfamily.

Its subcellular location is the cytoplasm. It carries out the reaction phosphoenolpyruvate + UDP-N-acetyl-alpha-D-glucosamine = UDP-N-acetyl-3-O-(1-carboxyvinyl)-alpha-D-glucosamine + phosphate. The protein operates within cell wall biogenesis; peptidoglycan biosynthesis. In terms of biological role, cell wall formation. Adds enolpyruvyl to UDP-N-acetylglucosamine. The protein is UDP-N-acetylglucosamine 1-carboxyvinyltransferase of Bartonella henselae (strain ATCC 49882 / DSM 28221 / CCUG 30454 / Houston 1) (Rochalimaea henselae).